The sequence spans 246 residues: MNPLISDFQTPQQRTPVIVALDFSNEKDTLGFVRNLDPTLCQIKIGKELFTATGRNLAESLINQGFKLFLDLKYHDIPHTVAQACKVAADMGVWMVDMHASGGRRMMEAAAEAVAGYGTKPLLIGVTVLTSMEQSDLAEIGLNTAPEEQVIRLAKLAQSSGLDGVVCSAQEAAPLRRELGQDFVLVTPGIRLDVADNNDDQRRIMTPAEALAAGSTYLVMGRPVTQAADPVAVLREVNRVANLEAN.

Substrate-binding positions include Asp-22, Lys-44, 71 to 80 (DLKYHDIPHT), Thr-130, Arg-191, Gln-201, Gly-221, and Arg-222. Lys-73 serves as the catalytic Proton donor.

The protein belongs to the OMP decarboxylase family. Type 1 subfamily. As to quaternary structure, homodimer.

It catalyses the reaction orotidine 5'-phosphate + H(+) = UMP + CO2. It participates in pyrimidine metabolism; UMP biosynthesis via de novo pathway; UMP from orotate: step 2/2. Catalyzes the decarboxylation of orotidine 5'-monophosphate (OMP) to uridine 5'-monophosphate (UMP). This is Orotidine 5'-phosphate decarboxylase from Neisseria meningitidis serogroup A / serotype 4A (strain DSM 15465 / Z2491).